We begin with the raw amino-acid sequence, 166 residues long: Interferon gamma (166 aa).

Residues 1–23 form the signal peptide; that stretch reads MKYTSYILAFQLCVVLGSLGCYC. Pyrrolidone carboxylic acid is present on Gln24. Residues Asn48, Asn86, and Asn120 are each glycosylated (N-linked (GlcNAc...) asparagine).

This sequence belongs to the type II (or gamma) interferon family. In terms of assembly, homodimer. Interacts with IFNGR1 (via extracellular domain); this interaction promotes IFNGR1 dimerization. Released primarily from activated T lymphocytes.

Its subcellular location is the secreted. Type II interferon produced by immune cells such as T-cells and NK cells that plays crucial roles in antimicrobial, antiviral, and antitumor responses by activating effector immune cells and enhancing antigen presentation. Primarily signals through the JAK-STAT pathway after interaction with its receptor IFNGR1 to affect gene regulation. Upon IFNG binding, IFNGR1 intracellular domain opens out to allow association of downstream signaling components JAK2, JAK1 and STAT1, leading to STAT1 activation, nuclear translocation and transcription of IFNG-regulated genes. Many of the induced genes are transcription factors such as IRF1 that are able to further drive regulation of a next wave of transcription. Plays a role in class I antigen presentation pathway by inducing a replacement of catalytic proteasome subunits with immunoproteasome subunits. In turn, increases the quantity, quality, and repertoire of peptides for class I MHC loading. Increases the efficiency of peptide generation also by inducing the expression of activator PA28 that associates with the proteasome and alters its proteolytic cleavage preference. Up-regulates as well MHC II complexes on the cell surface by promoting expression of several key molecules such as cathepsins B/CTSB, H/CTSH, and L/CTSL. Participates in the regulation of hematopoietic stem cells during development and under homeostatic conditions by affecting their development, quiescence, and differentiation. The protein is Interferon gamma (IFNG) of Callithrix jacchus (White-tufted-ear marmoset).